Reading from the N-terminus, the 302-residue chain is MHYPTALLFLILANGAQAFRICAFNAQRLTLAKVAREQVMDTLVRILARCDIMVLQEVVDSSGSAIPLLLRELNRFDGSGPYSTLSSPQLGRSTYMETYVYFYRSHKTQVLSSYVYNDEDDVFAREPFVAQFSLPSNVLPSLVLVPLHTTPKAVEKELNALYDVFLEVSQHWQSKDVILLGDFNADCASLTKKRLDKLELRTEPGFHWVIADGEDTTVRASTHCTYDRVVLHGERCRSLLHTAAAFDFPTSFQLTEEEALNISDHYPVEVELKLSQAHSVQPLSLTVLLLLSLLSPQLCPAA.

The N-terminal stretch at 1–18 (MHYPTALLFLILANGAQA) is a signal peptide. Active-site residues include Glu97 and His148. Cys187 and Cys224 form a disulfide bridge. N-linked (GlcNAc...) asparagine glycosylation occurs at Asn261.

This sequence belongs to the DNase I family. Highest levels in skeletal and cardiac muscles. Detectable in all other tissues tested except brain.

The protein resides in the endoplasmic reticulum. The polypeptide is Deoxyribonuclease-1-like 1 (DNASE1L1) (Homo sapiens (Human)).